A 793-amino-acid chain; its full sequence is Probable phosphoketolase (793 aa).

The protein belongs to the XFP family. Requires thiamine diphosphate as cofactor.

This Streptomyces avermitilis (strain ATCC 31267 / DSM 46492 / JCM 5070 / NBRC 14893 / NCIMB 12804 / NRRL 8165 / MA-4680) protein is Probable phosphoketolase.